The following is a 244-amino-acid chain: ATP-dependent Clp protease ATP-binding subunit CLPT4, chloroplastic (244 aa).

The transit peptide at methionine 1–arginine 64 directs the protein to the chloroplast. Residues serine 30–serine 48 show a composition bias toward low complexity. Disordered regions lie at residues serine 30 to tryptophan 55 and glycine 220 to leucine 244.

This sequence belongs to the ClpA/ClpB family.

The protein resides in the plastid. It localises to the chloroplast. Functionally, accessory protein regulating the assembly of the plastid Clp protease system. The sequence is that of ATP-dependent Clp protease ATP-binding subunit CLPT4, chloroplastic from Chlamydomonas reinhardtii (Chlamydomonas smithii).